A 158-amino-acid chain; its full sequence is Ribosome maturation factor RimP (158 aa).

This sequence belongs to the RimP family.

It localises to the cytoplasm. Its function is as follows. Required for maturation of 30S ribosomal subunits. This Streptococcus suis (strain 05ZYH33) protein is Ribosome maturation factor RimP.